The sequence spans 494 residues: Guanosine-5'-triphosphate,3'-diphosphate pyrophosphatase (494 aa).

This sequence belongs to the GppA/Ppx family. GppA subfamily.

The enzyme catalyses guanosine 3'-diphosphate 5'-triphosphate + H2O = guanosine 3',5'-bis(diphosphate) + phosphate + H(+). It participates in purine metabolism; ppGpp biosynthesis; ppGpp from GTP: step 2/2. Its function is as follows. Catalyzes the conversion of pppGpp to ppGpp. Guanosine pentaphosphate (pppGpp) is a cytoplasmic signaling molecule which together with ppGpp controls the 'stringent response', an adaptive process that allows bacteria to respond to amino acid starvation, resulting in the coordinated regulation of numerous cellular activities. The protein is Guanosine-5'-triphosphate,3'-diphosphate pyrophosphatase of Shigella dysenteriae serotype 1 (strain Sd197).